Reading from the N-terminus, the 56-residue chain is Small ribosomal subunit protein uS14 (56 aa).

Zn(2+)-binding residues include Cys21, Cys24, Cys39, and Cys42.

The protein belongs to the universal ribosomal protein uS14 family. Component of the 40S small ribosomal subunit. It depends on Zn(2+) as a cofactor.

It localises to the cytoplasm. The protein localises to the cytosol. Its subcellular location is the rough endoplasmic reticulum. The sequence is that of Small ribosomal subunit protein uS14 (RpS29) from Lonomia obliqua (Moth).